A 371-amino-acid chain; its full sequence is Cytochrome b (371 aa).

A run of 4 helical transmembrane segments spans residues 25–45, 69–90, 105–125, and 170–190; these read FGSMLLACSSMQVLTGFFLAV, WMMQNLHAIGASMFFICIYIHI, WLSGTTLLIMLMATAXXXXXX, and XXXXXXILPFGIISLSSLHIM. Positions 75 and 89 each coordinate heme b. Residues residue 174 and histidine 188 each contribute to the heme b site. Histidine 193 is an a ubiquinone binding site. The next 4 membrane-spanning stretches (helical) occupy residues 218-238, 280-300, 312-332, and 339-358; these read YKDLLMLSLMVLTLLMTVSFL, LGGALALAMSIMILLTTPFTH, IMQLMFWTLVATFVVITWAAT, and FTMISQVASTMYFLFFITNP.

This sequence belongs to the cytochrome b family. As to quaternary structure, the cytochrome bc1 complex contains 3 respiratory subunits (MT-CYB, CYC1 and UQCRFS1), 2 core proteins (UQCRC1 and UQCRC2) and probably 6 low-molecular weight proteins. Requires heme b as cofactor.

It is found in the mitochondrion inner membrane. Functionally, component of the ubiquinol-cytochrome c reductase complex (complex III or cytochrome b-c1 complex) that is part of the mitochondrial respiratory chain. The b-c1 complex mediates electron transfer from ubiquinol to cytochrome c. Contributes to the generation of a proton gradient across the mitochondrial membrane that is then used for ATP synthesis. The sequence is that of Cytochrome b (MT-CYB) from Eryx jaculus (Javelin sand boa).